Consider the following 418-residue polypeptide: Glutamyl-tRNA(Gln) amidotransferase subunit D (418 aa).

The region spanning 74 to 405 (KNISILSTGG…EEAKELMPKN (332 aa)) is the Asparaginase/glutaminase domain. Active-site residues include Thr84, Thr160, Asp161, and Lys237.

The protein belongs to the asparaginase 1 family. GatD subfamily. As to quaternary structure, heterodimer of GatD and GatE.

It carries out the reaction L-glutamyl-tRNA(Gln) + L-glutamine + ATP + H2O = L-glutaminyl-tRNA(Gln) + L-glutamate + ADP + phosphate + H(+). Allows the formation of correctly charged Gln-tRNA(Gln) through the transamidation of misacylated Glu-tRNA(Gln) in organisms which lack glutaminyl-tRNA synthetase. The reaction takes place in the presence of glutamine and ATP through an activated gamma-phospho-Glu-tRNA(Gln). The GatDE system is specific for glutamate and does not act on aspartate. This Methanococcus maripaludis (strain C6 / ATCC BAA-1332) protein is Glutamyl-tRNA(Gln) amidotransferase subunit D.